The following is a 429-amino-acid chain: Proton/sodium-glutamate symport protein (429 aa).

The Cytoplasmic portion of the chain corresponds to 1-5 (MKRIK). Residues 6 to 26 (FGLATQIFVGLILGVIVGVIW) traverse the membrane as a helical segment. The Extracellular segment spans residues 27-45 (YGNPALPTYLQPIGDLFLR). Residues 46-66 (LIKMIVIPIVVSSLIIGVAGA) traverse the membrane as a helical segment. Residues 67–79 (GNGKQVGKLGFRT) are Cytoplasmic-facing. The helical transmembrane segment at 80 to 100 (ILYFEIITTFAIILGLALANI) threads the bilayer. Topologically, residues 101 to 150 (FHPGTGVNIHEAQKSDISQYVETEKEQSNKSVAETFLHIVPTNFFQSLVE) are extracellular. Residues 151 to 171 (GDLLAIICFTVLFALGISAIG) traverse the membrane as a helical segment. The Cytoplasmic segment spans residues 172–190 (ERGKPVLAFFEGVSHAMFH). A helical transmembrane segment spans residues 191-211 (VVNLVMKVAPFGVFALIGVTV). The Extracellular segment spans residues 212 to 224 (SKFGLGSLISLGK). A helical membrane pass occupies residues 225–245 (LVGLVYVALAFFLIVIFGIVA). Position 246 (Lys246) is a topological domain, cytoplasmic. A helical membrane pass occupies residues 247–267 (IAGISIFKFLAYMKDEILLAF). The Extracellular segment spans residues 268–290 (STSSSETVLPRIMEKMEKIGCPK). The chain crosses the membrane as a helical span at residues 291 to 311 (GIVSFVIPIGYTFNLDGSVLY). Topologically, residues 312-321 (QSIAALFLAQ) are cytoplasmic. The chain crosses the membrane as a helical span at residues 322-342 (VYGIDLTIWHQITLVLVLMVT). The Extracellular portion of the chain corresponds to 343-353 (SKGMAAVPGTS). The helical transmembrane segment at 354 to 374 (FVVLLATLGTIGVPAEGLAFI) threads the bilayer. The Cytoplasmic segment spans residues 375-429 (AGVDRIMDMARTVVNLTGNALAAVVMSKWEGMFNPAKAETVMSQSKTEQNATISG).

Belongs to the dicarboxylate/amino acid:cation symporter (DAACS) (TC 2.A.23) family. Homotrimer. Interacts with FloT.

Its subcellular location is the cell membrane. The protein localises to the membrane raft. In terms of biological role, this carrier protein is part of the Na(+)-dependent, binding-protein-independent glutamate-aspartate transport system. This is Proton/sodium-glutamate symport protein (gltT) from Bacillus subtilis (strain 168).